A 320-amino-acid chain; its full sequence is ATP synthase gamma chain (320 aa).

Belongs to the ATPase gamma chain family. As to quaternary structure, F-type ATPases have 2 components, CF(1) - the catalytic core - and CF(0) - the membrane proton channel. CF(1) has five subunits: alpha(3), beta(3), gamma(1), delta(1), epsilon(1). CF(0) has three main subunits: a, b and c.

The protein localises to the cell membrane. Produces ATP from ADP in the presence of a proton gradient across the membrane. The gamma chain is believed to be important in regulating ATPase activity and the flow of protons through the CF(0) complex. This chain is ATP synthase gamma chain, found in Lactobacillus helveticus (strain DPC 4571).